A 722-amino-acid chain; its full sequence is Polyribonucleotide nucleotidyltransferase (722 aa).

2 residues coordinate Mg(2+): Asp487 and Asp493. The KH domain maps to 554-613 (PRIETFKIPTDKIREVIGTGGKVIREIVEKTGAKVNIEDDGTVKVASSDGESIKAAIKWI). One can recognise an S1 motif domain in the interval 623–691 (GEIYEGTVVK…DRGKTRLSMK (69 aa)). The tract at residues 691 to 722 (KVVDQDTGEDLEAKQKAEAKAEDEAPAQAAGE) is disordered. Positions 701–713 (LEAKQKAEAKAED) are enriched in basic and acidic residues.

Belongs to the polyribonucleotide nucleotidyltransferase family. Requires Mg(2+) as cofactor.

It localises to the cytoplasm. It carries out the reaction RNA(n+1) + phosphate = RNA(n) + a ribonucleoside 5'-diphosphate. Its function is as follows. Involved in mRNA degradation. Catalyzes the phosphorolysis of single-stranded polyribonucleotides processively in the 3'- to 5'-direction. This Rhodopseudomonas palustris (strain BisB5) protein is Polyribonucleotide nucleotidyltransferase.